Consider the following 584-residue polypeptide: Actin-binding protein IPP (584 aa).

The 68-residue stretch at 37–104 folds into the BTB domain; sequence CDVQLQVGQE…IYTGIVNIGV (68 aa). Kelch repeat units follow at residues 289–343, 344–390, 391–437, 439–485, 487–533, and 535–583; these read YLYA…VLGG, MVYA…VCYG, AIYA…EMQG, IYVI…ALND, IYSV…AVNG, and LYVS…GVAV.

The protein localises to the cytoplasm. It localises to the cytoskeleton. Its function is as follows. May play a role in organizing the actin cytoskeleton. The sequence is that of Actin-binding protein IPP (IPP) from Homo sapiens (Human).